A 294-amino-acid polypeptide reads, in one-letter code: Osteopontin (294 aa).

Residues 1 to 16 (MRLAVICFCLFGIASS) form the signal peptide. A phosphoserine mark is found at Ser24, Ser26, Ser27, Ser61, Ser62, Ser75, Ser77, Ser80, Ser106, Ser109, Ser112, Ser115, and Ser118. The disordered stretch occupies residues 42-274 (WLVPDPSQKQ…LVLDPKSKED (233 aa)). The segment covering 48–61 (SQKQNLLAPQNAVS) has biased composition (polar residues). Residues 85 to 110 (DDDDDDDDDDGDHAESEDSVDSDESD) show a composition bias toward acidic residues. Polar residues predominate over residues 121–130 (TVTASTQADT). Residues Thr123, Thr132, and Thr137 are each glycosylated (O-linked (GalNAc...) threonine). A Cell attachment site motif is present at residues 144–146 (RGD). Thr170 and Thr175 each carry phosphothreonine. Positions 174–187 (LTSHMKSGESKESL) are enriched in basic and acidic residues. Phosphoserine is present on residues Ser176, Ser180, Ser200, Ser209, Ser213, and Ser219. Residues 197–216 (SMPSDQDNNGKGSHESSQLD) are compositionally biased toward polar residues. O-linked (Xyl...) (chondroitin sulfate) serine glycosylation occurs at Ser219. The segment covering 220-232 (LETHRLEHSKESQ) has biased composition (basic and acidic residues). Thr222 is modified (phosphothreonine). Phosphoserine is present on residues Ser228, Ser231, Ser234, Ser238, Ser243, Ser247, Ser250, Ser255, Ser260, Ser271, Ser283, Ser288, Ser290, and Ser291. Polar residues predominate over residues 234 to 249 (SADQSDVIDSQASSKA). Residues 263-274 (DKLVLDPKSKED) show a composition bias toward basic and acidic residues. O-linked (Xyl...) (chondroitin sulfate) serine glycosylation occurs at Ser288.

The protein belongs to the osteopontin family. Interacts (via N-terminus) with integrin ITGA9:ITGB1. Post-translationally, extensively phosphorylated by FAM20C in the extracellular medium at multiple sites within the S-x-E/pS motif. The phosphorylated form inhibits hydroxyapatite crystallization. Dephosphorylation via a mechanism involving ALPL/TNAP promotes hydroxyapatite crystallization. In terms of processing, O-glycosylated. Forms covalent cross-links mediated by transglutaminase TGM2, between a glutamine and the epsilon-amino group of a lysine residue, forming homopolymers and heteropolymers, increasing its collagen binding properties.

It localises to the secreted. Functionally, major non-collagenous bone protein that binds tightly to hydroxyapatite. Appears to form an integral part of the mineralized matrix. Probably important to cell-matrix interaction. Its function is as follows. Acts as a cytokine involved in enhancing production of interferon-gamma and interleukin-12 and reducing production of interleukin-10 and is essential in the pathway that leads to type I immunity. This chain is Osteopontin (Spp1), found in Mus musculus (Mouse).